Here is a 618-residue protein sequence, read N- to C-terminus: MMFDRRFFALVVLLCVSAVRSTEDASDDELNYEMDEGVVVLTDKNFDAFLKKNPSVLVKFYAPWCGHCKHLAPEYEKASSKVSIPLAKVDATVETELGKRFEIQGYPTLKFWKDGKGPNDYDGGRDEAGIVEWVESRVDPNYKPPPEEVVTLTTENFDDFISNNELVLVEFYAPWCGHCKKLAPEYEKAAQKLKAQGSKVKLGKVDATIEKDLGTKYGVSGYPTMKIIRNGRRFDYNGPREAAGIIKYMTDQSKPAAKKLPKLKDVERFMSKDDVTIIGFFATEDSTAFEAFSDSAEMLREEFKTMGHTSDPAAFKKWDAKPNDIIIFYPSLFHSKFEPKSRTYNKAAATSEDLLAFFREHSAPLVGKMTKKNAATRYTKKPLVVVYYNADFSVQYREGSEYWRSKVLNIAQKYQKDKYKFAVADEEEFAKELEELGLGDSGLEHNVVVFGYDGKKYPMNPDEFDGELDENLEAFMKQISSGKAKAHVKSAPAPKDDKGPVKTVVGSNFDKIVNDESKDVLIEFYAPWCGHCKSFESKYVELAQALKKTQPNVVLAKMDATINDAPSQFAVEGFPTIYFAPAGKKSEPIKYSGNRDLEDLKKFMTKHGVKSFQKKDEL.

The N-terminal stretch at 1 to 21 is a signal peptide; it reads MMFDRRFFALVVLLCVSAVRS. Thioredoxin domains follow at residues 22-139, 138-254, and 480-609; these read TEDA…SRVD, VDPN…DQSK, and SSGK…KHGV. Cystine bridges form between Cys65–Cys68, Cys176–Cys179, and Cys529–Cys532. Positions 615 to 618 match the Prevents secretion from ER motif; that stretch reads KDEL.

Belongs to the protein disulfide isomerase family.

It is found in the endoplasmic reticulum lumen. It catalyses the reaction Catalyzes the rearrangement of -S-S- bonds in proteins.. This chain is Probable protein disulfide-isomerase A4, found in Caenorhabditis elegans.